Reading from the N-terminus, the 201-residue chain is Small ribosomal subunit protein uS4c (201 aa).

Positions 15–44 (LGALPGLTNKRPRAGSDLRNQSRSGKKSQY) are disordered. An S4 RNA-binding domain is found at 89–149 (MRLDNILFRL…DEQKSRALIQ (61 aa)).

It belongs to the universal ribosomal protein uS4 family. In terms of assembly, part of the 30S ribosomal subunit. Contacts protein S5. The interaction surface between S4 and S5 is involved in control of translational fidelity.

The protein resides in the plastid. It is found in the chloroplast. One of the primary rRNA binding proteins, it binds directly to 16S rRNA where it nucleates assembly of the body of the 30S subunit. In terms of biological role, with S5 and S12 plays an important role in translational accuracy. This is Small ribosomal subunit protein uS4c (rps4) from Helianthus annuus (Common sunflower).